Consider the following 883-residue polypeptide: MSKELSPKYNPAEVEAGRYQKWLDEDVFKPSGDKKAKPYSIVIPPPNVTGKLHLGHAWDTTLQDIIIRQKRMQGFDTLWLPGMDHAGIATQAKVEARLAESGISRYDLGREKFLDKVWEWKDEYAATIKEQWGKMGLSVDYSRERFTLDEGLSKAVRKVFVELYKKGWIYRGEFIINWDPKARTALSDIEVIHKDVEGAFYHMNYMLEDGSRALEVATTRPETMFGDTAVAVNPNDDRYKDLIGKNVILPILNKPIPIVGDEHADPEFGTGVVKITPAHDPNDFLVGQRHNLPQVNVMNDDGTMNELAGEFNGMDRFEARKAVVKKLEEIGALVEIEKMTHSVGHSERTGVPVEPRLSTQWFVKMDQLAKNAIANQDTDDKVDFYPPRFNDTFLQWMENVHDWVISRQLWWGHQIPAWYNAEGEIYVGEEAPEGDGWKQDEDVLDTWFSSALWPFSTMGWPDVDSEDFKRYFPTSTLVTGYDIIFFWVSRMIFQSLEFTGRQPFKNVLIHGLIRDEQGRKMSKSLGNGIDPMDVIEKYGADALRWFLSNGSAPGQDVRFSYEKMDASWNFINKIWNISRYILMNNEGLTLDVARENVAKVAAGQAGNVTDRWILHNLNETIGKVTENFDKFEFGVAGHILYNFIWDEFADWYVELTKEVLYSDNEDEKVITRSVLLYTLDQILRLLHPIMPFVTEEIFGQISEGSIVTAEYPVVCPEFENEEAAAGVEALKDVIRSVRNSRAEVNVAPSKPITILIKTSDSKLDAFFNDNINYIKRFTNPEHLEIAADVEVPDLVMSSIITGAEIYLPLADLLNVEEELARLEKELAKWQKELDMVGKKLSNERFVANAKPEVVQKERDKQKDYQAKYDAIVVRIDEMKKLVK.

The short motif at 46 to 56 is the 'HIGH' region element; sequence PNVTGKLHLGH. A 'KMSKS' region motif is present at residues 520-524; sequence KMSKS. Lysine 523 is an ATP binding site. Residues 809–844 adopt a coiled-coil conformation; sequence LADLLNVEEELARLEKELAKWQKELDMVGKKLSNER.

Belongs to the class-I aminoacyl-tRNA synthetase family. ValS type 1 subfamily. As to quaternary structure, monomer.

It is found in the cytoplasm. The catalysed reaction is tRNA(Val) + L-valine + ATP = L-valyl-tRNA(Val) + AMP + diphosphate. Functionally, catalyzes the attachment of valine to tRNA(Val). As ValRS can inadvertently accommodate and process structurally similar amino acids such as threonine, to avoid such errors, it has a 'posttransfer' editing activity that hydrolyzes mischarged Thr-tRNA(Val) in a tRNA-dependent manner. The sequence is that of Valine--tRNA ligase from Streptococcus thermophilus (strain CNRZ 1066).